The primary structure comprises 624 residues: Ceramide transfer protein (624 aa).

The span at 1-11 (MSDNQSWNSSG) shows a compositional bias: polar residues. Residues 1-24 (MSDNQSWNSSGSEEDPETESGPPV) form a disordered region. Residues 23–117 (PVERCGVLSK…WIDAIEQHKT (95 aa)) enclose the PH domain. S126 bears the Phosphoserine mark. Residue S132 is modified to Phosphoserine; by PKD. Phosphoserine is present on S135. A coiled-coil region spans residues 263 to 303 (IELMVKREDSWQKRLDKETEKKRRTEEAYKNAMTELKKKSH). S315 bears the Phosphoserine mark. The short motif at 321–327 (EFFDAVE) is the FFAT element. Y372 carries the post-translational modification Phosphotyrosine. S373, S377, and S380 each carry phosphoserine. One can recognise an START domain in the interval 389–618 (DVHRFSSQVE…FTSYVQEKTA (230 aa)). E472, Q493, N530, and Y579 together coordinate an N-acylsphing-4-enine.

As to quaternary structure, interacts with VAPA and VAPB. Interaction with VAPB is less efficient than with VAPA. Interacts (via FFAT motif) with the MOSPD2 (via MSP domain). In terms of processing, phosphorylation on Ser-132 decreases the affinity toward phosphatidylinositol 4-phosphate at Golgi membranes and reduces ceramide transfer activity. Inactivated by hyperphosphorylation of serine residues by CSNK1G2/CK1 that triggers dissociation from the Golgi complex, thus down-regulating ER-to-Golgi transport of ceramide and sphingomyelin synthesis.

The protein resides in the cytoplasm. The protein localises to the golgi apparatus. It localises to the endoplasmic reticulum. It carries out the reaction N-hexadecanoylsphing-4-enine(in) = N-hexadecanoylsphing-4-enine(out). Shelters ceramides and diacylglycerol lipids inside its START domain and mediates the intracellular trafficking of ceramides and diacylglycerol lipids in a non-vesicular manner. The sequence is that of Ceramide transfer protein (CERT1) from Pongo abelii (Sumatran orangutan).